The chain runs to 497 residues: Sperm motility kinase Z (497 aa).

A Protein kinase domain is found at 28-275; the sequence is YTVLKTLSQH…AQDLLSHPWL (248 aa). ATP contacts are provided by residues 34 to 42 and Lys-57; that span reads LSQHGTTEV. The Proton acceptor role is filled by Asp-146. Positions 292–332 constitute a UBA domain; it reads FPDPDIMAAMKNIGFHVQDIRESLKHRKFDETMATYNLLRA. Disordered stretches follow at residues 383–410 and 439–460; these read TEEHQLRQTGGTNAPFPPKKTPTMGRSQ and SSQAEKTSSDPEKSETSTSCPL.

The protein belongs to the protein kinase superfamily. CAMK Ser/Thr protein kinase family. Smok subfamily.

The catalysed reaction is L-seryl-[protein] + ATP = O-phospho-L-seryl-[protein] + ADP + H(+). The enzyme catalyses L-threonyl-[protein] + ATP = O-phospho-L-threonyl-[protein] + ADP + H(+). Its function is as follows. May play a role in sperm motility, especially in the regulation of flagellar function. This Mus musculus (Mouse) protein is Sperm motility kinase Z (Gm4922).